The chain runs to 271 residues: Large ribosomal subunit protein uL2cz/uL2cy (271 aa).

Disordered regions lie at residues 1-22 (MAKH…DRQV) and 223-271 (PVDH…RRRK).

It belongs to the universal ribosomal protein uL2 family. Part of the 50S ribosomal subunit.

The protein resides in the plastid. The protein localises to the chloroplast. This Sorghum bicolor (Sorghum) protein is Large ribosomal subunit protein uL2cz/uL2cy (rpl2-A).